A 426-amino-acid chain; its full sequence is Enolase 1 (426 aa).

Residue Q162 coordinates (2R)-2-phosphoglycerate. E204 acts as the Proton donor in catalysis. D241, E284, and D311 together coordinate Mg(2+). The (2R)-2-phosphoglycerate site is built by K336, R365, S366, and K387. K336 (proton acceptor) is an active-site residue.

This sequence belongs to the enolase family. It depends on Mg(2+) as a cofactor.

It is found in the cytoplasm. The protein resides in the secreted. It localises to the cell surface. It carries out the reaction (2R)-2-phosphoglycerate = phosphoenolpyruvate + H2O. Its pathway is carbohydrate degradation; glycolysis; pyruvate from D-glyceraldehyde 3-phosphate: step 4/5. Functionally, catalyzes the reversible conversion of 2-phosphoglycerate (2-PG) into phosphoenolpyruvate (PEP). It is essential for the degradation of carbohydrates via glycolysis. The polypeptide is Enolase 1 (Methanospirillum hungatei JF-1 (strain ATCC 27890 / DSM 864 / NBRC 100397 / JF-1)).